Consider the following 156-residue polypeptide: Large ribosomal subunit protein uL15 (156 aa).

Positions 14-35 (GSRTHGWGRVGQHRKSGSSGGK) are disordered.

Belongs to the universal ribosomal protein uL15 family. Part of the 50S ribosomal subunit.

Functionally, binds to the 23S rRNA. The sequence is that of Large ribosomal subunit protein uL15 from Pyrobaculum islandicum (strain DSM 4184 / JCM 9189 / GEO3).